Here is a 510-residue protein sequence, read N- to C-terminus: Chromosomal replication initiator protein DnaA (510 aa).

The interval Met1–Asp107 is domain I, interacts with DnaA modulators. The segment at Asp107–Thr169 is domain II. The disordered stretch occupies residues Pro119–Gly168. Residues Ser170–Ala386 are domain III, AAA+ region. ATP-binding residues include Gly214, Gly216, Lys217, and Thr218. The segment at Ser387–Arg510 is domain IV, binds dsDNA.

This sequence belongs to the DnaA family. In terms of assembly, oligomerizes as a right-handed, spiral filament on DNA at oriC.

The protein localises to the cytoplasm. In terms of biological role, plays an essential role in the initiation and regulation of chromosomal replication. ATP-DnaA binds to the origin of replication (oriC) to initiate formation of the DNA replication initiation complex once per cell cycle. Binds the DnaA box (a 9 base pair repeat at the origin) and separates the double-stranded (ds)DNA. Forms a right-handed helical filament on oriC DNA; dsDNA binds to the exterior of the filament while single-stranded (ss)DNA is stabiized in the filament's interior. The ATP-DnaA-oriC complex binds and stabilizes one strand of the AT-rich DNA unwinding element (DUE), permitting loading of DNA polymerase. After initiation quickly degrades to an ADP-DnaA complex that is not apt for DNA replication. Binds acidic phospholipids. In Mycobacterium ulcerans (strain Agy99), this protein is Chromosomal replication initiator protein DnaA.